We begin with the raw amino-acid sequence, 305 residues long: N-acetylmuramic acid 6-phosphate etherase (305 aa).

Residues 54 to 217 (AVPQLERGGR…SSALMVRLGK (164 aa)) enclose the SIS domain. The active-site Proton donor is Glu-82. Residue Glu-113 is part of the active site.

Belongs to the GCKR-like family. MurNAc-6-P etherase subfamily. As to quaternary structure, homodimer.

It carries out the reaction N-acetyl-D-muramate 6-phosphate + H2O = N-acetyl-D-glucosamine 6-phosphate + (R)-lactate. The protein operates within amino-sugar metabolism; N-acetylmuramate degradation. Specifically catalyzes the cleavage of the D-lactyl ether substituent of MurNAc 6-phosphate, producing GlcNAc 6-phosphate and D-lactate. The polypeptide is N-acetylmuramic acid 6-phosphate etherase (Deinococcus radiodurans (strain ATCC 13939 / DSM 20539 / JCM 16871 / CCUG 27074 / LMG 4051 / NBRC 15346 / NCIMB 9279 / VKM B-1422 / R1)).